The chain runs to 337 residues: Glyceraldehyde-3-phosphate dehydrogenase 1, cytosolic (337 aa).

The binding to NAD stretch occupies residues 1–151 (MGKIKIGING…YTSDVNIVSN (151 aa)). NAD(+)-binding positions include 13–14 (RI), Asp-35, and Arg-82. The catalytic stretch occupies residues 152-337 (ASCTTNCLAP…DLIRHMFKTQ (186 aa)). D-glyceraldehyde 3-phosphate-binding positions include 153–155 (SCT), Thr-184, 213–214 (TG), and Arg-236. Cys-154 (nucleophile) is an active-site residue. Asn-318 lines the NAD(+) pocket.

Belongs to the glyceraldehyde-3-phosphate dehydrogenase family. In terms of assembly, homotetramer.

It localises to the cytoplasm. It carries out the reaction D-glyceraldehyde 3-phosphate + phosphate + NAD(+) = (2R)-3-phospho-glyceroyl phosphate + NADH + H(+). Its pathway is carbohydrate degradation; glycolysis; pyruvate from D-glyceraldehyde 3-phosphate: step 1/5. Its function is as follows. Key enzyme in glycolysis that catalyzes the first step of the pathway by converting D-glyceraldehyde 3-phosphate (G3P) into 3-phospho-D-glyceroyl phosphate. Essential for the maintenance of cellular ATP levels and carbohydrate metabolism. The polypeptide is Glyceraldehyde-3-phosphate dehydrogenase 1, cytosolic (GAPC1) (Zea mays (Maize)).